A 73-amino-acid polypeptide reads, in one-letter code: U3-agatoxin-Ao1j (73 aa).

An N-terminal signal peptide occupies residues 1–20 (MRTIISLLLLSAMVFAVIEA). A propeptide spanning residues 21–34 (ISLEEGLQLFEGER) is cleaved from the precursor. Disulfide bonds link cysteine 36/cysteine 52, cysteine 43/cysteine 57, cysteine 51/cysteine 67, and cysteine 59/cysteine 65. The residue at position 71 (serine 71) is a Serine amide.

This sequence belongs to the neurotoxin 07 (Beta/delta-agtx) family. 03 (aga-4) subfamily. Aga sub-subfamily. Expressed by the venom gland.

The protein resides in the secreted. Its function is as follows. Insecticidal neurotoxin that induces an irreversible spastic paralysis when injected into insects. Modifies presynaptic voltage-gated sodium channels (Nav), causing them to open at the normal resting potential of the nerve. This leads to spontaneous release of neurotransmitter and repetitive action potentials in motor neurons. This is U3-agatoxin-Ao1j from Agelena orientalis (Funnel-web spider).